We begin with the raw amino-acid sequence, 115 residues long: Large ribosomal subunit protein bL19 (115 aa).

Belongs to the bacterial ribosomal protein bL19 family.

Its function is as follows. This protein is located at the 30S-50S ribosomal subunit interface and may play a role in the structure and function of the aminoacyl-tRNA binding site. This is Large ribosomal subunit protein bL19 from Hydrogenovibrio crunogenus (strain DSM 25203 / XCL-2) (Thiomicrospira crunogena).